Reading from the N-terminus, the 141-residue chain is Large ribosomal subunit protein uL11 (141 aa).

It belongs to the universal ribosomal protein uL11 family. In terms of assembly, part of the ribosomal stalk of the 50S ribosomal subunit. Interacts with L10 and the large rRNA to form the base of the stalk. L10 forms an elongated spine to which L12 dimers bind in a sequential fashion forming a multimeric L10(L12)X complex. In terms of processing, one or more lysine residues are methylated.

In terms of biological role, forms part of the ribosomal stalk which helps the ribosome interact with GTP-bound translation factors. The chain is Large ribosomal subunit protein uL11 from Streptococcus thermophilus (strain CNRZ 1066).